We begin with the raw amino-acid sequence, 217 residues long: Octanoyltransferase (217 aa).

Residues 32–207 (SDSPDELWIV…TLSQLLGYQQ (176 aa)) enclose the BPL/LPL catalytic domain. Substrate-binding positions include 71–78 (RGGQVTYH), 138–140 (SLG), and 151–153 (GLA). Cysteine 169 acts as the Acyl-thioester intermediate in catalysis.

It belongs to the LipB family.

It localises to the cytoplasm. It carries out the reaction octanoyl-[ACP] + L-lysyl-[protein] = N(6)-octanoyl-L-lysyl-[protein] + holo-[ACP] + H(+). The protein operates within protein modification; protein lipoylation via endogenous pathway; protein N(6)-(lipoyl)lysine from octanoyl-[acyl-carrier-protein]: step 1/2. In terms of biological role, catalyzes the transfer of endogenously produced octanoic acid from octanoyl-acyl-carrier-protein onto the lipoyl domains of lipoate-dependent enzymes. Lipoyl-ACP can also act as a substrate although octanoyl-ACP is likely to be the physiological substrate. This chain is Octanoyltransferase, found in Shewanella sp. (strain MR-7).